The primary structure comprises 215 residues: Pyridoxine/pyridoxamine 5'-phosphate oxidase (215 aa).

Substrate contacts are provided by residues 9-12 (RRDY) and K69. FMN contacts are provided by residues 64-69 (RVLLLK), 79-80 (FT), K86, and Q108. The substrate site is built by Y126, R130, and S134. FMN is bound by residues 143–144 (QS) and W188. Residue 194 to 196 (RLH) coordinates substrate. Position 198 (R198) interacts with FMN.

The protein belongs to the pyridoxamine 5'-phosphate oxidase family. As to quaternary structure, homodimer. FMN serves as cofactor.

It catalyses the reaction pyridoxamine 5'-phosphate + O2 + H2O = pyridoxal 5'-phosphate + H2O2 + NH4(+). The enzyme catalyses pyridoxine 5'-phosphate + O2 = pyridoxal 5'-phosphate + H2O2. It functions in the pathway cofactor metabolism; pyridoxal 5'-phosphate salvage; pyridoxal 5'-phosphate from pyridoxamine 5'-phosphate: step 1/1. Its pathway is cofactor metabolism; pyridoxal 5'-phosphate salvage; pyridoxal 5'-phosphate from pyridoxine 5'-phosphate: step 1/1. Catalyzes the oxidation of either pyridoxine 5'-phosphate (PNP) or pyridoxamine 5'-phosphate (PMP) into pyridoxal 5'-phosphate (PLP). The polypeptide is Pyridoxine/pyridoxamine 5'-phosphate oxidase (Pseudomonas syringae pv. syringae (strain B728a)).